Reading from the N-terminus, the 350-residue chain is tRNA uridine(34) hydroxylase (350 aa).

The region spanning D146–L240 is the Rhodanese domain. Catalysis depends on C200, which acts as the Cysteine persulfide intermediate. Residues R319–G328 are compositionally biased toward basic and acidic residues. The segment at R319–E350 is disordered.

The protein belongs to the TrhO family.

It carries out the reaction uridine(34) in tRNA + AH2 + O2 = 5-hydroxyuridine(34) in tRNA + A + H2O. Its function is as follows. Catalyzes oxygen-dependent 5-hydroxyuridine (ho5U) modification at position 34 in tRNAs. The sequence is that of tRNA uridine(34) hydroxylase from Salmonella typhimurium (strain LT2 / SGSC1412 / ATCC 700720).